The following is a 375-amino-acid chain: MSNEAPEVEPHSKRRKKEASPSSSSGFLQSLPEAVAMICLARVSRLDHAALSLVSKSCRSMVLSPELYQTRSLIGYAEKFLYVCFCMPTDETLCCHEKINGNRSLNVLFLDCRSHKWHHVTSMRVARVSPEVSVVDGKINVWGGCKYKHYYDWGEVFDPKTQTWADMSIPKPVREEKIYVVDSWDVGSYYYLPSKSIWEKGNQDSKRSKDWCLIDKLIYSCGNDGGIYWCEAGELDWCDAVGIDWREVFGLEFLSKELRESRVVYFGGKMVKVWESYKIMYNISLNLEELLPETQLTNLTELGHNVLVFWEKLECCCDGFKILEIWCAEISLERWEGGEILGRCDWCHPILAINLLTVDPLFYHSMVLYSIPVDV.

The tract at residues 1–27 (MSNEAPEVEPHSKRRKKEASPSSSSGF) is disordered. Residues 25–71 (SGFLQSLPEAVAMICLARVSRLDHAALSLVSKSCRSMVLSPELYQTR) form the F-box domain. Residues 138–183 (KINVWGGCKYKHYYDWGEVFDPKTQTWADMSIPKPVREEKIYVVDS) form a Kelch repeat.

The polypeptide is Putative F-box/kelch-repeat protein At3g24610 (Arabidopsis thaliana (Mouse-ear cress)).